Reading from the N-terminus, the 951-residue chain is PE-PGRS family protein PE_PGRS3 (951 aa).

The 91-residue stretch at 4–94 (VIAAPEVIAA…GAYAAAEAAA (91 aa)) folds into the PE domain. Positions 887–919 (CRRQRRADRQRRQRRQRRQSRGHARCRRHRRAA) are enriched in basic residues. The interval 887–951 (CRRQRRADRQ…GISCSPQMMP (65 aa)) is disordered.

It belongs to the mycobacterial PE family. PGRS subfamily.

The protein localises to the cell outer membrane. Its subcellular location is the secreted. It is found in the cell wall. It localises to the cell surface. In terms of biological role, the arginine-rich C-terminal region protrudes from the mycobacterial membrane and mediates M.tuberculosis entry into host epithelial cells. May serve as a bridge between mycobacteria and host cells by interacting with specific host phospholipids and extracting them from host cells, for their direct integration or as a source of phosphate, during phases of TB pathogenesis when M.tuberculosis is short of phosphate supply. The protein is PE-PGRS family protein PE_PGRS3 (PE_PGRS3) of Mycobacterium tuberculosis (strain CDC 1551 / Oshkosh).